A 489-amino-acid chain; its full sequence is Lysine--tRNA ligase (489 aa).

The Mg(2+) site is built by Glu399 and Glu406.

The protein belongs to the class-II aminoacyl-tRNA synthetase family. As to quaternary structure, homodimer. Mg(2+) is required as a cofactor.

It localises to the cytoplasm. The catalysed reaction is tRNA(Lys) + L-lysine + ATP = L-lysyl-tRNA(Lys) + AMP + diphosphate. In Roseiflexus sp. (strain RS-1), this protein is Lysine--tRNA ligase.